Reading from the N-terminus, the 524-residue chain is Protein hunchback (524 aa).

Disordered stretches follow at residues 42 to 86 (IVKR…PQTQ) and 101 to 187 (YNHN…DEQS). Residues 59-75 (SGSDFHSSSPSSDTSQD) are compositionally biased toward low complexity. Polar residues predominate over residues 76–86 (LQHSYQSPQTQ). Composition is skewed to basic and acidic residues over residues 118–127 (KSEKEEKDME), 138–154 (RKPDDNQDHLRRLEMSL), and 164–178 (TSEHSVDELSGKSDN). 4 consecutive C2H2-type zinc fingers follow at residues 202–224 (FKCKQCDFVAITKLEQWNHSKVH), 231–253 (LTCPKCPFITEYKHHLEYHLRNH), 259–281 (FQCNKCDYTCVNKSMLNSHMKSH), and 298–311 (YCHSLKIHLRRYGH). The tract at residues 402-442 (DLSKPGCSYTGEQKSRRKGPAFKVDPTQVESEEEDEETSTT) is disordered. C2H2-type zinc fingers lie at residues 471–493 (NSCQYCNIAFGDAVLYTIHMGYH) and 499–523 (FTCNMCGVECSDKVSFFLHIARVSH).

This sequence belongs to the hunchback C2H2-type zinc-finger protein family.

It is found in the nucleus. Functionally, gap class segmentation protein that controls development of head structures. This is Protein hunchback (hb) from Tribolium castaneum (Red flour beetle).